The sequence spans 197 residues: uncharacterized protein (197 aa).

The SIS domain maps to 33 to 184; sequence MISKIMDASS…IAEFMSILGK (152 aa).

This sequence belongs to the SIS family. PHI subfamily.

This is an uncharacterized protein from Methanothermobacter thermautotrophicus (strain ATCC 29096 / DSM 1053 / JCM 10044 / NBRC 100330 / Delta H) (Methanobacterium thermoautotrophicum).